The sequence spans 142 residues: Transcriptional regulator MraZ (142 aa).

SpoVT-AbrB domains lie at 5–47 (THTP…PTET) and 76–119 (ASDT…DATE).

This sequence belongs to the MraZ family. As to quaternary structure, forms oligomers.

Its subcellular location is the cytoplasm. The protein localises to the nucleoid. The polypeptide is Transcriptional regulator MraZ (Cutibacterium acnes (strain DSM 16379 / KPA171202) (Propionibacterium acnes)).